Reading from the N-terminus, the 267-residue chain is 2-keto-3-deoxy-L-rhamnonate aldolase (267 aa).

The active-site Proton acceptor is the histidine 49. Residue glutamine 151 participates in substrate binding. Mg(2+) is bound at residue glutamate 153. Residues alanine 178 and aspartate 179 each contribute to the substrate site. Aspartate 179 is a binding site for Mg(2+).

It belongs to the HpcH/HpaI aldolase family. KDR aldolase subfamily. As to quaternary structure, homohexamer. Requires Mg(2+) as cofactor.

The catalysed reaction is 2-dehydro-3-deoxy-L-rhamnonate = (S)-lactaldehyde + pyruvate. Functionally, catalyzes the reversible retro-aldol cleavage of 2-keto-3-deoxy-L-rhamnonate (KDR) to pyruvate and lactaldehyde. The sequence is that of 2-keto-3-deoxy-L-rhamnonate aldolase from Salmonella paratyphi A (strain ATCC 9150 / SARB42).